The primary structure comprises 173 residues: Photosystem I assembly protein Ycf3 (173 aa).

3 TPR repeats span residues Ala35–Pro68, Ser72–Met105, and Gly120–Asn153.

It belongs to the Ycf3 family.

The protein resides in the cellular thylakoid membrane. Functionally, essential for the assembly of the photosystem I (PSI) complex. May act as a chaperone-like factor to guide the assembly of the PSI subunits. The chain is Photosystem I assembly protein Ycf3 from Microcystis aeruginosa (strain NIES-843 / IAM M-2473).